A 91-amino-acid chain; its full sequence is Mercuric transport protein periplasmic component (91 aa).

A signal peptide spans 1–19 (MKKLFASLALAAAVAPVWA). The HMA domain occupies 22 to 88 (QTVTLAVPGM…ATADAGYPSS (67 aa)). 2 residues coordinate Hg(2+): Cys33 and Cys36.

This sequence belongs to the MerP family. As to quaternary structure, monomer.

The protein localises to the periplasm. In terms of biological role, involved in mercury resistance. Acts as a mercury scavenger that specifically binds to a mercuric ion in the periplasm and probably passes it to the cytoplasmic mercuric reductase MerA via the mercuric transport protein MerT. The protein is Mercuric transport protein periplasmic component of Shigella flexneri.